The following is a 224-amino-acid chain: Oxygen-evolving enhancer protein 3-1, chloroplastic (224 aa).

A chloroplast-targeting transit peptide spans 1 to 44; the sequence is MASMGGLHGASPAVLEGSLKINGSSRLNGSGRVAVAQRSRLVVR. A thylakoid-targeting transit peptide spans 45-75; the sequence is AQQSEETSRRSVIGLVAAGLAGGSFVQAVLA. A Phosphothreonine modification is found at Thr189. Tyr209 is modified (phosphotyrosine). Thr212 is subject to Phosphothreonine.

It belongs to the PsbQ family. In terms of tissue distribution, expressed in green tissue, with high steady-state mRNA levels in leaves. Not expressed in roots.

It is found in the plastid. The protein localises to the chloroplast thylakoid membrane. Required for photosystem II assembly/stability and photoautotrophic growth under low light conditions. The sequence is that of Oxygen-evolving enhancer protein 3-1, chloroplastic (PSBQ1) from Arabidopsis thaliana (Mouse-ear cress).